The following is a 449-amino-acid chain: Trigger factor (449 aa).

Residues 162 to 243 enclose the PPIase FKBP-type domain; that stretch reads GEFVTINITA…ITATKQRELP (82 aa). A compositionally biased stretch (basic and acidic residues) spans 428–437; the sequence is GNEIDPKEYF. The segment at 428–449 is disordered; it reads GNEIDPKEYFGEEEVAETESEA. Positions 438–449 are enriched in acidic residues; the sequence is GEEEVAETESEA.

Belongs to the FKBP-type PPIase family. Tig subfamily.

Its subcellular location is the cytoplasm. The catalysed reaction is [protein]-peptidylproline (omega=180) = [protein]-peptidylproline (omega=0). In terms of biological role, involved in protein export. Acts as a chaperone by maintaining the newly synthesized protein in an open conformation. Functions as a peptidyl-prolyl cis-trans isomerase. In Corynebacterium glutamicum (strain R), this protein is Trigger factor.